We begin with the raw amino-acid sequence, 379 residues long: Gonadotropin-releasing hormone II receptor (379 aa).

The Extracellular segment spans residues 1–40 (MSAGNGTPWGSAAGEESWAASGVAVEGSELPTFSAAAKVR). A helical transmembrane segment spans residues 41–60 (VGVTIVLFVSSAGGNLAVLW). Residues 61 to 76 (SVTRPQPSQLRPSPVR) lie on the Cytoplasmic side of the membrane. A helical transmembrane segment spans residues 77-96 (TLFAHLAAADLLVTFVVMPL). Topologically, residues 97 to 114 (DATWNITVQWLAEDIACR) are extracellular. An N-linked (GlcNAc...) asparagine glycan is attached at Asn101. A disulfide bond links Cys113 and Cys188. The chain crosses the membrane as a helical span at residues 115-136 (TLMFLKLMAMYSAAFLPVVIGL). Residues 137-160 (DRQAAVLNPLGSRSGVRKLLGAAW) lie on the Cytoplasmic side of the membrane. A helical membrane pass occupies residues 161-178 (GLSFLLALPQLFLFHTVH). Residues 179 to 204 (RAGPVPFTQCVTKGSFKARWQETTYN) lie on the Extracellular side of the membrane. A helical membrane pass occupies residues 205–224 (LFTFRCLFLLPLTAMAICYS). The Cytoplasmic portion of the chain corresponds to 225 to 278 (HIVLSVSSPQTRKGSHAPAGEFALCRSFDNCPRVRLWALRLALLILLTFILCWT). Residues 279 to 297 (PYYLLGLWYWFSPTMLTEV) form a helical membrane-spanning segment. Residues 298–303 (PPSLSH) lie on the Extracellular side of the membrane. Residues 304–323 (ILFLFGLLNAPLDPLLYGAF) traverse the membrane as a helical segment. Residues 324-379 (TLGCQRGHQELSIDSSNEGSGRMLQQEIHALRQQEVQKTVTSRSAGETKDISITSI) are Cytoplasmic-facing.

It belongs to the G-protein coupled receptor 1 family. In terms of processing, phosphorylated on the C-terminal cytoplasmic tail.

It localises to the cell membrane. In terms of biological role, receptor for gonadotropin releasing hormone II (GnRH II). This receptor mediates its action by association with G proteins that activate a phosphatidylinositol-calcium second messenger system. This chain is Gonadotropin-releasing hormone II receptor (GNRHR2), found in Macaca mulatta (Rhesus macaque).